The sequence spans 203 residues: Ribosomal RNA small subunit methyltransferase G (203 aa).

S-adenosyl-L-methionine is bound by residues G73, L78, 124–125 (VE), and R139.

It belongs to the methyltransferase superfamily. RNA methyltransferase RsmG family.

The protein resides in the cytoplasm. The catalysed reaction is guanosine(527) in 16S rRNA + S-adenosyl-L-methionine = N(7)-methylguanosine(527) in 16S rRNA + S-adenosyl-L-homocysteine. In terms of biological role, specifically methylates the N7 position of guanine in position 527 of 16S rRNA. The protein is Ribosomal RNA small subunit methyltransferase G of Haemophilus influenzae (strain PittEE).